A 427-amino-acid chain; its full sequence is Serine--tRNA ligase (427 aa).

L-serine is bound at residue 231 to 233; that stretch reads TAE. 262 to 264 serves as a coordination point for ATP; the sequence is RSE. Residue Glu285 coordinates L-serine. 349-352 is an ATP binding site; that stretch reads EISS. Ser385 is an L-serine binding site.

The protein belongs to the class-II aminoacyl-tRNA synthetase family. Type-1 seryl-tRNA synthetase subfamily. In terms of assembly, homodimer. The tRNA molecule binds across the dimer.

Its subcellular location is the cytoplasm. The catalysed reaction is tRNA(Ser) + L-serine + ATP = L-seryl-tRNA(Ser) + AMP + diphosphate + H(+). The enzyme catalyses tRNA(Sec) + L-serine + ATP = L-seryl-tRNA(Sec) + AMP + diphosphate + H(+). Its pathway is aminoacyl-tRNA biosynthesis; selenocysteinyl-tRNA(Sec) biosynthesis; L-seryl-tRNA(Sec) from L-serine and tRNA(Sec): step 1/1. Catalyzes the attachment of serine to tRNA(Ser). Is also able to aminoacylate tRNA(Sec) with serine, to form the misacylated tRNA L-seryl-tRNA(Sec), which will be further converted into selenocysteinyl-tRNA(Sec). This is Serine--tRNA ligase from Brucella canis (strain ATCC 23365 / NCTC 10854 / RM-666).